Consider the following 559-residue polypeptide: NXPE family member 3 (559 aa).

An N-terminal signal peptide occupies residues 1–30 (MWTNFFKLRLFCCLLAVLMVVVLVINVTQV). Residues asparagine 237, asparagine 292, and asparagine 346 are each glycosylated (N-linked (GlcNAc...) asparagine).

This sequence belongs to the NXPE family.

It localises to the secreted. This chain is NXPE family member 3 (NXPE3), found in Homo sapiens (Human).